Consider the following 23-residue polypeptide: Alyteserin-1c (23 aa).

S23 carries the serine amide modification.

As to expression, expressed by the skin glands.

The protein resides in the secreted. It is found in the target cell membrane. Its function is as follows. Antibacterial peptide with amphipathic alpha-helical structure that shows selective growth-inhibitory activity against Gram-negative bacteria but low hemolytic activity against human erythrocytes (LC(50)=145-220 uM). It is moderately active against the Gram-negative bacteria E.coli (MIC=25 uM), K.pneumoniae (MIC=50 uM), P.aeruginosa (MIC=25 uM), A.baumannii (MIC=6 uM), and is weaky active against the Gram-positive S.aureus (MIC=100-250 uM). In Alytes obstetricans (Common midwife toad), this protein is Alyteserin-1c.